The following is an 802-amino-acid chain: Lon protease (802 aa).

One can recognise a Lon N-terminal domain in the interval 17 to 209 (LPILPLNNVV…QVLSFLERER (193 aa)). 363–370 (GPPGVGKT) lines the ATP pocket. Residues 599–780 (EDEVGVVTGL…DEVLPRVLHP (182 aa)) form the Lon proteolytic domain. Residues serine 686 and lysine 729 contribute to the active site.

Belongs to the peptidase S16 family. Homohexamer. Organized in a ring with a central cavity.

It is found in the cytoplasm. The catalysed reaction is Hydrolysis of proteins in presence of ATP.. Its function is as follows. ATP-dependent serine protease that mediates the selective degradation of mutant and abnormal proteins as well as certain short-lived regulatory proteins. Required for cellular homeostasis and for survival from DNA damage and developmental changes induced by stress. Degrades polypeptides processively to yield small peptide fragments that are 5 to 10 amino acids long. Binds to DNA in a double-stranded, site-specific manner. In Roseiflexus castenholzii (strain DSM 13941 / HLO8), this protein is Lon protease.